The following is a 185-amino-acid chain: Pyridoxal 5'-phosphate synthase subunit PdxT (185 aa).

An L-glutamine-binding site is contributed by 46–48 (GES). The active-site Nucleophile is Cys-78. L-glutamine-binding positions include Arg-106 and 132–133 (IR). Active-site charge relay system residues include His-168 and Glu-170.

It belongs to the glutaminase PdxT/SNO family. As to quaternary structure, in the presence of PdxS, forms a dodecamer of heterodimers. Only shows activity in the heterodimer.

The catalysed reaction is aldehydo-D-ribose 5-phosphate + D-glyceraldehyde 3-phosphate + L-glutamine = pyridoxal 5'-phosphate + L-glutamate + phosphate + 3 H2O + H(+). The enzyme catalyses L-glutamine + H2O = L-glutamate + NH4(+). Its pathway is cofactor biosynthesis; pyridoxal 5'-phosphate biosynthesis. In terms of biological role, catalyzes the hydrolysis of glutamine to glutamate and ammonia as part of the biosynthesis of pyridoxal 5'-phosphate. The resulting ammonia molecule is channeled to the active site of PdxS. In Corynebacterium diphtheriae (strain ATCC 700971 / NCTC 13129 / Biotype gravis), this protein is Pyridoxal 5'-phosphate synthase subunit PdxT.